We begin with the raw amino-acid sequence, 366 residues long: Ribosomal RNA large subunit methyltransferase M (366 aa).

Residues serine 188, 221–224 (CPGG), aspartate 240, aspartate 260, and aspartate 277 each bind S-adenosyl-L-methionine. Catalysis depends on lysine 306, which acts as the Proton acceptor.

The protein belongs to the class I-like SAM-binding methyltransferase superfamily. RNA methyltransferase RlmE family. RlmM subfamily. In terms of assembly, monomer.

It is found in the cytoplasm. It carries out the reaction cytidine(2498) in 23S rRNA + S-adenosyl-L-methionine = 2'-O-methylcytidine(2498) in 23S rRNA + S-adenosyl-L-homocysteine + H(+). In terms of biological role, catalyzes the 2'-O-methylation at nucleotide C2498 in 23S rRNA. This Salmonella heidelberg (strain SL476) protein is Ribosomal RNA large subunit methyltransferase M.